Reading from the N-terminus, the 514-residue chain is GMP synthase [glutamine-hydrolyzing] (514 aa).

Positions 7-197 constitute a Glutamine amidotransferase type-1 domain; that stretch reads KVLILDFGSQ…LFNICKCERN (191 aa). The active-site Nucleophile is Cys84. Catalysis depends on residues His171 and Glu173. In terms of domain architecture, GMPS ATP-PPase spans 198–389; sequence WNMGSFIEYE…LKLPEDIVYR (192 aa). 225 to 231 provides a ligand contact to ATP; that stretch reads SGGVDSS.

As to quaternary structure, homodimer.

It carries out the reaction XMP + L-glutamine + ATP + H2O = GMP + L-glutamate + AMP + diphosphate + 2 H(+). The protein operates within purine metabolism; GMP biosynthesis; GMP from XMP (L-Gln route): step 1/1. Its function is as follows. Catalyzes the synthesis of GMP from XMP. In Brachyspira hyodysenteriae (strain ATCC 49526 / WA1), this protein is GMP synthase [glutamine-hydrolyzing].